The sequence spans 359 residues: 4-hydroxy-3-methylbut-2-en-1-yl diphosphate synthase (flavodoxin) (359 aa).

[4Fe-4S] cluster contacts are provided by Cys264, Cys267, Cys299, and Glu306.

This sequence belongs to the IspG family. The cofactor is [4Fe-4S] cluster.

The enzyme catalyses (2E)-4-hydroxy-3-methylbut-2-enyl diphosphate + oxidized [flavodoxin] + H2O + 2 H(+) = 2-C-methyl-D-erythritol 2,4-cyclic diphosphate + reduced [flavodoxin]. Its pathway is isoprenoid biosynthesis; isopentenyl diphosphate biosynthesis via DXP pathway; isopentenyl diphosphate from 1-deoxy-D-xylulose 5-phosphate: step 5/6. Converts 2C-methyl-D-erythritol 2,4-cyclodiphosphate (ME-2,4cPP) into 1-hydroxy-2-methyl-2-(E)-butenyl 4-diphosphate. In Helicobacter pylori (strain P12), this protein is 4-hydroxy-3-methylbut-2-en-1-yl diphosphate synthase (flavodoxin).